Reading from the N-terminus, the 426-residue chain is Dihydroorotase (426 aa).

Residues His62 and His64 each coordinate Zn(2+). Substrate contacts are provided by residues 64–66 (HLR) and Asn96. Residues Asp154, His181, and His234 each contribute to the Zn(2+) site. Asn280 lines the substrate pocket. Asp307 contributes to the Zn(2+) binding site. Residue Asp307 is part of the active site. Substrate contacts are provided by residues His311 and 325–326 (FG).

It belongs to the metallo-dependent hydrolases superfamily. DHOase family. Class I DHOase subfamily. The cofactor is Zn(2+).

It catalyses the reaction (S)-dihydroorotate + H2O = N-carbamoyl-L-aspartate + H(+). Its pathway is pyrimidine metabolism; UMP biosynthesis via de novo pathway; (S)-dihydroorotate from bicarbonate: step 3/3. Functionally, catalyzes the reversible cyclization of carbamoyl aspartate to dihydroorotate. This chain is Dihydroorotase, found in Desulforapulum autotrophicum (strain ATCC 43914 / DSM 3382 / VKM B-1955 / HRM2) (Desulfobacterium autotrophicum).